The chain runs to 168 residues: SsrA-binding protein (168 aa).

It belongs to the SmpB family.

It is found in the cytoplasm. Required for rescue of stalled ribosomes mediated by trans-translation. Binds to transfer-messenger RNA (tmRNA), required for stable association of tmRNA with ribosomes. tmRNA and SmpB together mimic tRNA shape, replacing the anticodon stem-loop with SmpB. tmRNA is encoded by the ssrA gene; the 2 termini fold to resemble tRNA(Ala) and it encodes a 'tag peptide', a short internal open reading frame. During trans-translation Ala-aminoacylated tmRNA acts like a tRNA, entering the A-site of stalled ribosomes, displacing the stalled mRNA. The ribosome then switches to translate the ORF on the tmRNA; the nascent peptide is terminated with the 'tag peptide' encoded by the tmRNA and targeted for degradation. The ribosome is freed to recommence translation, which seems to be the essential function of trans-translation. This Mycobacterium sp. (strain JLS) protein is SsrA-binding protein.